The following is a 461-amino-acid chain: Probable outer membrane lipoprotein SilC (461 aa).

The first 17 residues, 1-17, serve as a signal peptide directing secretion; that stretch reads MFKLKLLSISTIFILAG. A lipid anchor (N-palmitoyl cysteine) is attached at C18. Residue C18 is the site of S-diacylglycerol cysteine attachment.

This sequence belongs to the outer membrane factor (OMF) (TC 1.B.17) family.

The protein localises to the cell outer membrane. In terms of biological role, component of the sil cation-efflux system that confers resistance to silver. May be part of a three-component cation/proton antiporter. The polypeptide is Probable outer membrane lipoprotein SilC (silC) (Salmonella typhimurium).